We begin with the raw amino-acid sequence, 192 residues long: MKIKTVEFARSAFNEEQYPKDNLPQIVIVGRSNVGKSTLINTVLNRKNLAKTSSRPGKTRGINFYLINNKFYLVDLPGYGYAKVSKEMKKQWAHNIETFLNTSQNLRHGLFLIDIRRNPTEDDFLMINWFKHKNLPFTVVLTKADKVNKSESRKAVEDICKIFKINREEVIIFSALEKMGVSQVLSIFEKYA.

Residues 22 to 192 form the EngB-type G domain; the sequence is NLPQIVIVGR…QVLSIFEKYA (171 aa). Residues 30–37, 57–61, 75–78, 142–145, and 173–175 each bind GTP; these read GRSNVGKS, GKTRG, DLPG, TKAD, and FSA. S37 and T59 together coordinate Mg(2+).

This sequence belongs to the TRAFAC class TrmE-Era-EngA-EngB-Septin-like GTPase superfamily. EngB GTPase family. Mg(2+) serves as cofactor.

Its function is as follows. Necessary for normal cell division and for the maintenance of normal septation. The sequence is that of Probable GTP-binding protein EngB from Thermoanaerobacter pseudethanolicus (strain ATCC 33223 / 39E) (Clostridium thermohydrosulfuricum).